A 326-amino-acid chain; its full sequence is Zinc-dependent endopolyphosphatase (326 aa).

The Cytoplasmic segment spans residues 1-9; the sequence is MEDKRKRRA. Residues 10–30 traverse the membrane as a helical segment; sequence ATLSTALILFVACCVYTLYIF. Residues 31–326 lie on the Vacuolar side of the membrane; it reads KFDNPRLSPP…DYELIQVQCS (296 aa). Asparagine 90 and asparagine 241 each carry an N-linked (GlcNAc...) asparagine glycan.

The protein belongs to the metallophosphoesterase superfamily. As to quaternary structure, interacts with PPN1. The cofactor is Zn(2+). It depends on Co(2+) as a cofactor. Mg(2+) serves as cofactor.

The protein resides in the vacuole membrane. The catalysed reaction is [phosphate](n+1) + n H2O = (n+1) phosphate + n H(+). With respect to regulation, not sensitive to heparin inhibition. Its function is as follows. Catalyzes the hydrolysis of inorganic polyphosphate (polyP) chains of many hundreds of phosphate residues into shorter lengths. Exclusively shows endopolyphosphatase activity, cleaving inside the polyP chain. Together with PPN1, responsible for a substantial fraction of polyphosphatase activity that is necessary to mobilize polyP stores in response to phosphate scarcity. In Saccharomyces cerevisiae (strain ATCC 204508 / S288c) (Baker's yeast), this protein is Zinc-dependent endopolyphosphatase.